The primary structure comprises 422 residues: UDP-N-acetylglucosamine 1-carboxyvinyltransferase (422 aa).

Phosphoenolpyruvate is bound at residue 22–23 (KN). R93 is a UDP-N-acetyl-alpha-D-glucosamine binding site. C117 functions as the Proton donor in the catalytic mechanism. Position 117 is a 2-(S-cysteinyl)pyruvic acid O-phosphothioketal (C117). UDP-N-acetyl-alpha-D-glucosamine-binding positions include 122–126 (RPVDQ), D305, and I327.

The protein belongs to the EPSP synthase family. MurA subfamily.

It is found in the cytoplasm. It catalyses the reaction phosphoenolpyruvate + UDP-N-acetyl-alpha-D-glucosamine = UDP-N-acetyl-3-O-(1-carboxyvinyl)-alpha-D-glucosamine + phosphate. It participates in cell wall biogenesis; peptidoglycan biosynthesis. Cell wall formation. Adds enolpyruvyl to UDP-N-acetylglucosamine. The chain is UDP-N-acetylglucosamine 1-carboxyvinyltransferase from Bordetella petrii (strain ATCC BAA-461 / DSM 12804 / CCUG 43448).